The following is a 128-amino-acid chain: 2-iminobutanoate/2-iminopropanoate deaminase (128 aa).

Substrate is bound at residue Arg-105.

Belongs to the RutC family. As to quaternary structure, homotrimer.

It localises to the cytoplasm. The catalysed reaction is 2-iminobutanoate + H2O = 2-oxobutanoate + NH4(+). The enzyme catalyses 2-iminopropanoate + H2O = pyruvate + NH4(+). It participates in amino-acid biosynthesis; L-isoleucine biosynthesis; 2-oxobutanoate from L-threonine. Functionally, accelerates the release of ammonia from reactive enamine/imine intermediates of the PLP-dependent threonine dehydratase (IlvA) in the low water environment of the cell. It catalyzes the deamination of enamine/imine intermediates to yield 2-ketobutyrate and ammonia. It is required for the detoxification of reactive intermediates of IlvA due to their highly nucleophilic abilities and to avoid they are captured by anthranilate phosphoribosyltransferase (TrpD) to generate PRA, an intermediate in the alternative pyrimidine biosynthetic (APB) pathway. Also required for full activity of IlvE which is involved in the isoleucine biosynthesis. RidA also accelerates the release of pyruvate produced by IlvA from L-serine. The sequence is that of 2-iminobutanoate/2-iminopropanoate deaminase from Salmonella typhimurium (strain LT2 / SGSC1412 / ATCC 700720).